The chain runs to 137 residues: Small ribosomal subunit protein uS12 (137 aa).

Disordered regions lie at residues 1–21 (MPTI…KSDS) and 34–57 (VHTK…TPKK).

It belongs to the universal ribosomal protein uS12 family. As to quaternary structure, part of the 30S ribosomal subunit. Contacts proteins S8 and S17. May interact with IF1 in the 30S initiation complex.

Functionally, with S4 and S5 plays an important role in translational accuracy. Its function is as follows. Interacts with and stabilizes bases of the 16S rRNA that are involved in tRNA selection in the A site and with the mRNA backbone. Located at the interface of the 30S and 50S subunits, it traverses the body of the 30S subunit contacting proteins on the other side and probably holding the rRNA structure together. The combined cluster of proteins S8, S12 and S17 appears to hold together the shoulder and platform of the 30S subunit. The polypeptide is Small ribosomal subunit protein uS12 (Streptococcus mutans serotype c (strain ATCC 700610 / UA159)).